Here is a 157-residue protein sequence, read N- to C-terminus: uncharacterized protein (157 aa).

Residues 9–146 (LLINYKTLDE…GDFYVWHPET (138 aa)) form the N-acetyltransferase domain.

This is an uncharacterized protein from Bacillus anthracis (strain CDC 684 / NRRL 3495).